The sequence spans 330 residues: Catharanthine synthase (330 aa).

Residues 81–83 carry the Involved in the stabilization of the negatively charged intermediate by the formation of the oxyanion hole motif; the sequence is HGA. Gly84 provides a ligand contact to catharanthine. The Proton acceptor role is filled by Ser173. Residue Asp274 is part of the active site. Tyr305 serves as a coordination point for catharanthine. Catalysis depends on Tyr305, which acts as the Proton donor/acceptor.

This sequence belongs to the 'GDXG' lipolytic enzyme family. As to quaternary structure, interacts with dehydroprecondylocarpine acetate synthase (DPAS). Expressed in leaf epidermis.

Its subcellular location is the cytoplasm. It localises to the cytosol. It is found in the nucleus. It catalyses the reaction dehydrosecodine = catharanthine. It participates in alkaloid biosynthesis. Component of iboga and aspidosperma monoterpenoid indole alkaloids (MIAs, e.g. tabersonine and catharanthine) biosynthesis pathway from 19E-geissoschizine, psychoactive compounds likely to be used in the treatment of opioid dependence. Catalyzes the conversion of dehydrosecodine to catharanthine. This chain is Catharanthine synthase, found in Catharanthus roseus (Madagascar periwinkle).